A 423-amino-acid chain; its full sequence is 3-phosphoshikimate 1-carboxyvinyltransferase (423 aa).

K21, S22, and R26 together coordinate 3-phosphoshikimate. K21 is a binding site for phosphoenolpyruvate. Phosphoenolpyruvate is bound by residues G93 and R123. The 3-phosphoshikimate site is built by S168, S169, Q170, S196, D311, and K338. Q170 contributes to the phosphoenolpyruvate binding site. The active-site Proton acceptor is D311. Phosphoenolpyruvate contacts are provided by R342, R383, and K408.

Belongs to the EPSP synthase family. In terms of assembly, monomer.

It localises to the cytoplasm. The enzyme catalyses 3-phosphoshikimate + phosphoenolpyruvate = 5-O-(1-carboxyvinyl)-3-phosphoshikimate + phosphate. Its pathway is metabolic intermediate biosynthesis; chorismate biosynthesis. Its function is as follows. Catalyzes the transfer of the enolpyruvyl moiety of phosphoenolpyruvate (PEP) to the 5-hydroxyl of shikimate-3-phosphate (S3P) to produce enolpyruvyl shikimate-3-phosphate and inorganic phosphate. The protein is 3-phosphoshikimate 1-carboxyvinyltransferase of Methanosphaerula palustris (strain ATCC BAA-1556 / DSM 19958 / E1-9c).